A 60-amino-acid chain; its full sequence is Large ribosomal subunit protein bL33 (60 aa).

Belongs to the bacterial ribosomal protein bL33 family.

This chain is Large ribosomal subunit protein bL33, found in Cytophaga hutchinsonii (strain ATCC 33406 / DSM 1761 / CIP 103989 / NBRC 15051 / NCIMB 9469 / D465).